Here is a 360-residue protein sequence, read N- to C-terminus: uncharacterized protein (360 aa).

The 4Fe-4S ferredoxin-type domain maps to 11–40; sequence KEEVWDTNRCSGCGACVAVCPVNNLYFREE.

Belongs to the FrhB family.

This is an uncharacterized protein from Methanocaldococcus jannaschii (strain ATCC 43067 / DSM 2661 / JAL-1 / JCM 10045 / NBRC 100440) (Methanococcus jannaschii).